A 1367-amino-acid polypeptide reads, in one-letter code: MSELGVAVGQKIELADGSGRTAFVRYVGETAFAPGTWVGIELDEPSGKNDGSVQGERYFNCEMGYGMFVRPTTFNVIAQPPPPPPPSTFRRSVTTRPTSLNASTTRRPAPVDSGLAKRMSLNAPSPSPGPRPSRTSSTSITRSPTRSPTKQLATASSSGNPSRSGTPSTTTKPAGPTTRTRPSLSTSRHSMGPPPTPTTRTTRKPSVSSVGTRPSIGATRPVGGRASMSARSSTNRLSDPRESTGSVSSVGKSGFKRGSASPRSSDEELSASPVPASPVHQKTAALEKLTAPGAGNGGGGASPGATSPNLKATTITPRSSITNTATMNKEIEDLKAKLKVLEKKRMEDREKLNSLEKVKAERDKFERIIQTLQIKYQPQQQEIQDLKRQLKEAENRLYNVEELQAEHDTAMELATLDREMAEETAEVLKVELDALKQKNEELELEVEVLREENSEFTNGMSPEERASTGWLQMERNNERLREALIRLRDITQQQEEELKDQIKSMEEDLREFETIKEQHTTAKEKLAQTEAIVEDLREQLNNALGAEEIIESLTEQTMNQSEEIKELRAVIDDLESLKEINDELEINHVQNEKEMQEEIDLKDSIIAEQFRQANLQRESLEDMEYTLSRFRELVTSLQSDLEDMRASHAVTENESEQLNSRSRAMLDLNMKLQISASKAQVKTIDLELRRMEAQEAEQHLEIVKLFLPDTYQSDRDSVLALLRFKRLAFKANLLNGFIKERVNGQPHPGHEDDIFDGCDAIDKLTWVSAMCDRFVNAISHCSLEQFSRYEGALYELEPVERALNGWIDGLRRDDLKEKQCADELKRTIALMTHLGEVHISNDLESFADDVHMKALLMQSHLESAAISVNSLKAMVQRVIPSSGEDDELAQYFSKRAEAVVSQTRSAKVIAGKTVRALEDLKTRSLSLTPDTLEAFEQSETATRDLANMARQIGLDLHAFLHEEGRTEPYNYMEVQSCIQRSAQASSPTASSPESDLFNTYLSYLRNATSTISDLASLASDLAQTQEFDRTPAPWILRSAELKAAKTVAPDINDELRRLRDDIAEARRSIAVREEMLSTAQVKIETLESRMRDANAKAARIVDLEADLQAAKKEAAQLQEDMEKQDRELKALESDRDKWKKIASESRVVVADGSGVGVDNKASAERAVATAREMDALKKEIEALQAAVRYLREDSRRARLKEQGDYEWLAEPLVKKKPSVQEQRKQLVKKEGKAVLGELVKLVSSAKVFDLGSLPEKAEDRLKWRPAKTTPGWWVAKQMEDWEALKEWEGSVKGRVRELGGVPGSKKAEREEEAKRMVRRTAAAKLQIRLPGMEGKVGHGGGGGSGRRVQIVGSREWESLQGRLAVVV.

One can recognise a CAP-Gly domain in the interval 28-70; the sequence is GETAFAPGTWVGIELDEPSGKNDGSVQGERYFNCEMGYGMFVR. The disordered stretch occupies residues 76 to 318; the sequence is VIAQPPPPPP…NLKATTITPR (243 aa). Composition is skewed to low complexity over residues 88-99 and 132-149; these read TFRRSVTTRPTS and PSRTSSTSITRSPTRSPT. A compositionally biased stretch (polar residues) spans 150-163; sequence KQLATASSSGNPSR. 2 stretches are compositionally biased toward low complexity: residues 164–190 and 243–259; these read SGTPSTTTKPAGPTTRTRPSLSTSRHS and STGSVSSVGKSGFKRGS. 3 coiled-coil regions span residues 321 to 598, 637 to 698, and 1039 to 1199; these read ITNT…MQEE, LQSD…EAEQ, and AELK…RARL.

It belongs to the dynactin 150 kDa subunit family. Large macromolecular complex of at least 10 components; p150(glued) binds directly to microtubules and to cytoplasmic dynein.

The protein resides in the cytoplasm. It is found in the cytoskeleton. Functionally, required for the cytoplasmic dynein-driven retrograde movement of vesicles and organelles along microtubules. Dynein-dynactin interaction is a key component of the mechanism of axonal transport of vesicles and organelles. The polypeptide is Dynactin, 150 kDa isoform (ro-3) (Neurospora crassa (strain ATCC 24698 / 74-OR23-1A / CBS 708.71 / DSM 1257 / FGSC 987)).